The chain runs to 305 residues: NAD kinase 2 (305 aa).

D78 functions as the Proton acceptor in the catalytic mechanism. NAD(+) contacts are provided by residues 78-79 (DG), 152-153 (NE), D182, 193-198 (TAYSLS), and N251.

This sequence belongs to the NAD kinase family. It depends on a divalent metal cation as a cofactor.

It is found in the cytoplasm. It catalyses the reaction NAD(+) + ATP = ADP + NADP(+) + H(+). Functionally, involved in the regulation of the intracellular balance of NAD and NADP, and is a key enzyme in the biosynthesis of NADP. Catalyzes specifically the phosphorylation on 2'-hydroxyl of the adenosine moiety of NAD to yield NADP. The protein is NAD kinase 2 of Synechococcus sp. (strain ATCC 27144 / PCC 6301 / SAUG 1402/1) (Anacystis nidulans).